We begin with the raw amino-acid sequence, 96 residues long: Prokineticin Bm8-f (96 aa).

The N-terminal stretch at 1–19 (MKCFAQIVVLLLVIAFSHG) is a signal peptide. 5 disulfides stabilise this stretch: cysteine 26–cysteine 38, cysteine 32–cysteine 50, cysteine 37–cysteine 78, cysteine 60–cysteine 86, and cysteine 80–cysteine 95.

It belongs to the AVIT (prokineticin) family. In terms of tissue distribution, expressed by the skin glands.

The protein resides in the secreted. Its function is as follows. Potent agonist for both PKR1/PROKR1 and PKR2/PROKR2, and inducer of a potent and long-lasting hyperalgesia. Also potentiates capsaicin-induced TRPV1 current, when tested on DRG neurons. At subnanomolar concentrations, this protein both induces potent chemotaxis of macrophages and stimulates LPS-induced production of the pro-inflammatory cytokines IL-1 and IL-12. In vivo, potently stimulates the contraction of the guinea-pig gastrointestinal (GI) smooth muscle (nanomolar concentration). The sequence is that of Prokineticin Bm8-f from Bombina maxima (Giant fire-bellied toad).